The chain runs to 340 residues: Phenylalanine--tRNA ligase alpha subunit (340 aa).

Residue E255 participates in Mg(2+) binding.

It belongs to the class-II aminoacyl-tRNA synthetase family. Phe-tRNA synthetase alpha subunit type 1 subfamily. As to quaternary structure, tetramer of two alpha and two beta subunits. The cofactor is Mg(2+).

Its subcellular location is the cytoplasm. The catalysed reaction is tRNA(Phe) + L-phenylalanine + ATP = L-phenylalanyl-tRNA(Phe) + AMP + diphosphate + H(+). The protein is Phenylalanine--tRNA ligase alpha subunit of Moorella thermoacetica (strain ATCC 39073 / JCM 9320).